The primary structure comprises 484 residues: EF-hand calcium-binding domain-containing protein 14 (484 aa).

3 disordered regions span residues 1 to 48 (MKKR…TDEE), 227 to 255 (GSME…HSES), and 313 to 395 (EQRT…FTSD). The span at 37–48 (PDSDSESSTDEE) shows a compositional bias: acidic residues. Polar residues-rich tracts occupy residues 228-239 (SMENNGSNQILP), 315-324 (RTNVSSSTME), and 335-347 (LVTN…QAQS). 2 EF-hand domains span residues 423–452 (SSIK…WNSL) and 453–484 (GSAM…ALGI). The Ca(2+) site is built by D466, N468, D470, R472, and E477.

This is EF-hand calcium-binding domain-containing protein 14 (Efcab14) from Mus musculus (Mouse).